The primary structure comprises 119 residues: Fluoride-specific ion channel FluC 2 (119 aa).

2 helical membrane passes run 1–21 (MIFA…ALTS) and 44–64 (GAFF…YAFL). Residues Gly70 and Thr73 each coordinate Na(+). Residues 98–118 (LLASYLGGAVLLTCGYYLGSL) form a helical membrane-spanning segment.

This sequence belongs to the fluoride channel Fluc/FEX (TC 1.A.43) family.

It localises to the cell membrane. It carries out the reaction fluoride(in) = fluoride(out). With respect to regulation, na(+) is not transported, but it plays an essential structural role and its presence is essential for fluoride channel function. In terms of biological role, fluoride-specific ion channel. Important for reducing fluoride concentration in the cell, thus reducing its toxicity. The polypeptide is Fluoride-specific ion channel FluC 2 (Lactobacillus delbrueckii subsp. bulgaricus (strain ATCC 11842 / DSM 20081 / BCRC 10696 / JCM 1002 / NBRC 13953 / NCIMB 11778 / NCTC 12712 / WDCM 00102 / Lb 14)).